The chain runs to 126 residues: Aspartate 1-decarboxylase (126 aa).

Serine 25 (schiff-base intermediate with substrate; via pyruvic acid) is an active-site residue. Residue serine 25 is modified to Pyruvic acid (Ser). Threonine 57 contacts substrate. Tyrosine 58 acts as the Proton donor in catalysis. 73–75 (GGA) is a binding site for substrate.

It belongs to the PanD family. In terms of assembly, heterooctamer of four alpha and four beta subunits. Pyruvate serves as cofactor. In terms of processing, is synthesized initially as an inactive proenzyme, which is activated by self-cleavage at a specific serine bond to produce a beta-subunit with a hydroxyl group at its C-terminus and an alpha-subunit with a pyruvoyl group at its N-terminus.

The protein resides in the cytoplasm. The catalysed reaction is L-aspartate + H(+) = beta-alanine + CO2. Its pathway is cofactor biosynthesis; (R)-pantothenate biosynthesis; beta-alanine from L-aspartate: step 1/1. Its function is as follows. Catalyzes the pyruvoyl-dependent decarboxylation of aspartate to produce beta-alanine. This chain is Aspartate 1-decarboxylase, found in Xylella fastidiosa (strain Temecula1 / ATCC 700964).